The chain runs to 247 residues: Diglucosylglycerate octanoyltransferase (247 aa).

It belongs to the OctT acyltransferase family. In terms of assembly, homotetramer.

It catalyses the reaction (2R)-2-O-[alpha-D-glucopyranosyl-(1-&gt;6)-alpha-D-glucopyranosyl]-glycerate + octanoyl-CoA = (2R)-2-O-[6-O-octanoyl-alpha-D-glucopyranosyl-(1-&gt;6)-alpha-D-glucopyranosyl]-glycerate + CoA. In terms of biological role, sugar octanoyltransferase likely involved in the biosynthesis of mycobacterial methylglucose lipopolysaccharide (MGLP). Catalyzes the transfer of an octanoyl group from octanoyl-CoA to the C6 OH of the second glucose in diglucosylglycerate (DGG). DGG is the preferred acceptor, but to a lesser extent, GG (glucosylglycerate) can also be used as substrate. DGG and GG are the two earliest intermediates in MGLP biosynthesis. The sequence is that of Diglucosylglycerate octanoyltransferase from Mycobacterium tuberculosis (strain ATCC 25618 / H37Rv).